The sequence spans 433 residues: D-amino acid dehydrogenase (433 aa).

3–17 serves as a coordination point for FAD; the sequence is VLVLGSGVIGTTSAY.

Belongs to the DadA oxidoreductase family. It depends on FAD as a cofactor.

The catalysed reaction is a D-alpha-amino acid + A + H2O = a 2-oxocarboxylate + AH2 + NH4(+). The protein operates within amino-acid degradation; D-alanine degradation; NH(3) and pyruvate from D-alanine: step 1/1. Oxidative deamination of D-amino acids. The sequence is that of D-amino acid dehydrogenase from Pseudomonas syringae pv. syringae (strain B728a).